The following is a 122-amino-acid chain: Large ribosomal subunit protein bL12 (122 aa).

This sequence belongs to the bacterial ribosomal protein bL12 family. Homodimer. Part of the ribosomal stalk of the 50S ribosomal subunit. Forms a multimeric L10(L12)X complex, where L10 forms an elongated spine to which 2 to 4 L12 dimers bind in a sequential fashion. Binds GTP-bound translation factors.

Forms part of the ribosomal stalk which helps the ribosome interact with GTP-bound translation factors. Is thus essential for accurate translation. The sequence is that of Large ribosomal subunit protein bL12 from Clostridium botulinum (strain Langeland / NCTC 10281 / Type F).